Consider the following 2300-residue polypeptide: Adenylate cyclase (2300 aa).

2 stretches are compositionally biased toward polar residues: residues 1-21 (MTRN…SSIT) and 28-41 (TPTS…TRPL). Disordered stretches follow at residues 1–256 (MTRN…GSFL), 272–593 (GIRP…DLTR), and 631–652 (TKLF…MDED). Composition is skewed to low complexity over residues 42–61 (SPSL…VSRS) and 92–152 (SSQS…QVSP). The segment covering 153–169 (TGGSRLTQSPTTPSNAS) has biased composition (polar residues). A compositionally biased stretch (basic and acidic residues) spans 170–185 (IREHRMSELGGYRREM). The segment covering 204–221 (QQQPQQPQQQQQQQQQQQ) has biased composition (low complexity). A compositionally biased stretch (polar residues) spans 228 to 237 (VSGTFSNLSQ). The segment covering 303–313 (SIASITTTASS) has biased composition (low complexity). The segment covering 333 to 344 (GDRDDWPGRDSS) has biased composition (basic and acidic residues). Residues 345–357 (EISLPQPSHSGPM) are compositionally biased toward polar residues. A compositionally biased stretch (pro residues) spans 410-421 (PSRPRTPVPAPE). The segment covering 455–469 (DSSQNPPKTSSSARS) has biased composition (polar residues). Positions 484-501 (KSNEDPRALKPSLSREDS) are enriched in basic and acidic residues. Positions 511–550 (NGSSSMMGTRSRAQSPAPSWTGTSRGLKANSISDGTSSPA) are enriched in polar residues. Basic residues predominate over residues 552–565 (SHKKGILGRFRRHN). Low complexity predominate over residues 631 to 643 (TKLFTSKKSSSAK). One can recognise a Ras-associating domain in the interval 749 to 841 (SNYYIRVFRS…IDEIGREDNS (93 aa)). LRR repeat units follow at residues 867-890 (NQKL…LYRK), 892-914 (AEIV…FIQA), 915-938 (CTAL…FATA), 939-961 (SKLT…ELSK), 962-986 (LTGL…GAYK), 988-1008 (LRTL…ICEL), 1009-1031 (ETIV…LMKL), 1033-1055 (NLEK…VRDL), 1056-1079 (VSLR…DLPR), 1081-1097 (EILS…SGSF), 1098-1119 (ERLR…KAPV), 1120-1142 (PTLK…IDNL), 1143-1165 (MNLE…IGNL), 1166-1188 (KKLD…IGCL), 1189-1211 (TELR…IWWA), and 1213-1234 (KLEH…ASRA). Positions 1228-1336 (PKPASRAPQA…VITPSNGPRK (109 aa)) are disordered. A compositionally biased stretch (polar residues) spans 1253–1263 (ANKNGLLSRTP). Over residues 1313 to 1327 (TSVVSRSTTQSSTGV) the composition is skewed to low complexity. LRR repeat units lie at residues 1349-1369 (SGSL…VFEE), 1373-1396 (LPEL…TIRS), 1398-1420 (PQLV…DFLE), 1422-1445 (HCLL…ISRA), 1447-1469 (KLQV…PYDW), and 1474-1497 (NRDL…YRQP). The region spanning 1552 to 1828 (PYGMADTLGK…NKLLIMMIGV (277 aa)) is the PPM-type phosphatase domain. Residues 1847–1867 (FSMPQDDPSHVPPSGNKRRKV) are disordered. The region spanning 1892 to 2029 (SIVFTDIKNS…PMVNKASRIS (138 aa)) is the Guanylate cyclase domain. Residues Asp-1897 and Asp-1940 each contribute to the Mg(2+) site. Residues 2272–2300 (LDQAETDDATDNNSSGDVDTLDGSDTEQE) are disordered. The segment covering 2290-2300 (DTLDGSDTEQE) has biased composition (acidic residues).

Belongs to the adenylyl cyclase class-4/guanylyl cyclase family. Requires Mg(2+) as cofactor.

The enzyme catalyses ATP = 3',5'-cyclic AMP + diphosphate. Its function is as follows. Plays essential roles in regulation of cellular metabolism by catalyzing the synthesis of a second messenger, cAMP. The polypeptide is Adenylate cyclase (cr-1) (Neurospora crassa (strain ATCC 24698 / 74-OR23-1A / CBS 708.71 / DSM 1257 / FGSC 987)).